A 230-amino-acid polypeptide reads, in one-letter code: Large ribosomal subunit protein uL4 (230 aa).

The disordered stretch occupies residues 51-105 (RAAARQGTHSTKTRGDVSGGGRKPYRQKGTGRARQGSMRAPQFTGGGIVHGPKLR).

The protein belongs to the universal ribosomal protein uL4 family. As to quaternary structure, part of the 50S ribosomal subunit.

Functionally, one of the primary rRNA binding proteins, this protein initially binds near the 5'-end of the 23S rRNA. It is important during the early stages of 50S assembly. It makes multiple contacts with different domains of the 23S rRNA in the assembled 50S subunit and ribosome. Forms part of the polypeptide exit tunnel. The protein is Large ribosomal subunit protein uL4 of Mycobacterium leprae (strain Br4923).